A 3526-amino-acid polypeptide reads, in one-letter code: WD repeat and FYVE domain-containing protein 3 (3526 aa).

Residues serine 1942 and serine 2278 each carry the phosphoserine modification. A sufficient for localization to p62 bodies/ALIS region spans residues 2285 to 2981; that stretch reads LTGSRRNRKE…PHPPKRVRSR (697 aa). 2 disordered regions span residues 2403 to 2429 and 2459 to 2522; these read ETNVASEIPSKQPETPDDIPQKKPARY and SSEG…EKTD. The segment covering 2468 to 2477 has biased composition (basic and acidic residues); it reads EPEHGEDTIA. Serine 2492 is subject to Phosphoserine. A BEACH-type PH domain is found at 2531 to 2656; the sequence is EEGEKIQHMY…IRNKVYQRFL (126 aa). The interval 2586–3526 is interaction with SQSTM1; that stretch reads MHEPIIPRGA…RGSEDGPRNC (941 aa). In terms of domain architecture, BEACH spans 2683 to 2976; it reads GLLSTLVGEK…QLFKKPHPPK (294 aa). The interaction with ATG5 stretch occupies residues 2981–3526; sequence RLNGDNAGIS…RGSEDGPRNC (546 aa). WD repeat units lie at residues 3077-3115, 3125-3164, 3167-3206, and 3210-3254; these read SEWGQILCAICPNPKLVITGGTSTVVCVWEMGTSKEKAK, GHTDTVTCATASLAYHIIVSGSRDRTCIIWDLNKLSFLTQ, GHRAPVSALCINELTGDIVSCAGTYIHVWSINGNPIVSVN, and GRSQ…VPET. The disordered stretch occupies residues 3272–3335; the sequence is AQIGQEAQDE…SGSDDSRRWS (64 aa). Residues 3278–3290 show a composition bias toward acidic residues; sequence AQDEDSSDSEADE. The interaction with GABARAP stretch occupies residues 3313–3363; that stretch reads AASCRATAAWCTDSGSDDSRRWSDQLSLDEKDGFIFVNYSEGQTRAHLQGP. 2 positions are modified to phosphoserine: serine 3335 and serine 3339. The LC3-interacting region (LIR) motif lies at 3346–3349; sequence FIFV. The stretch at 3408–3447 is one WD 5 repeat; that stretch reads AHPAEVTALGISKDHSRILVGDSRGRVFSWSVSDQPGRSA. An FYVE-type zinc finger spans residues 3454–3514; that stretch reads DEGGDSCSGC…VCQNCYYNLQ (61 aa). Positions 3460, 3463, 3476, 3479, 3484, 3487, 3506, and 3509 each coordinate Zn(2+).

In terms of assembly, directly interacts with ATG5 and associates with the ATG12-ATG5-ATG16L complex. Interacts with p62/SQSTM1; this interaction is required to recruit WDFY3 to cytoplasmic bodies and to PML bodies. Directly interacts with GABARAP, GABARAPL1 and GABARAPL2; the interaction with GABARAP is required for WDFY3 recruitment to MAP1LC3B-positive p62/SQSTM1 bodies. Weakly interacts with MAP1LC3C; this interaction is direct. Does not interact with MAP1LC3A, nor MAP1LC3B. Interacts with TRAF6. Expressed in osteoclast and their mononuclear precursors (at protein level).

It is found in the nucleus membrane. Its subcellular location is the cytoplasm. The protein resides in the cytosol. The protein localises to the nucleus. It localises to the PML body. It is found in the membrane. Its subcellular location is the perikaryon. The protein resides in the cell projection. The protein localises to the axon. Required for selective macroautophagy (aggrephagy). Acts as an adapter protein by linking specific proteins destined for degradation to the core autophagic machinery members, such as the ATG5-ATG12-ATG16L E3-like ligase, SQSTM1 and LC3. Along with p62/SQSTM1, involved in the formation and autophagic degradation of cytoplasmic ubiquitin-containing inclusions (p62 bodies, ALIS/aggresome-like induced structures). Along with SQSTM1, required to recruit ubiquitinated proteins to PML bodies in the nucleus. Important for normal brain development. Essential for the formation of axonal tracts throughout the brain and spinal cord, including the formation of the major forebrain commissures. Involved in the ability of neural cells to respond to guidance cues. Required for cortical neurons to respond to the trophic effects of netrin-1/NTN1. Regulates Wnt signaling through the removal of DVL3 aggregates, likely in an autophagy-dependent manner. This process may be important for the determination of brain size during embryonic development. May regulate osteoclastogenesis by acting on the TNFSF11/RANKL - TRAF6 pathway. After cytokinetic abscission, involved in midbody remnant degradation. In vitro strongly binds to phosphatidylinositol 3-phosphate (PtdIns3P). This chain is WD repeat and FYVE domain-containing protein 3 (WDFY3), found in Homo sapiens (Human).